A 391-amino-acid chain; its full sequence is Probable sugar efflux transporter (391 aa).

Transmembrane regions (helical) follow at residues V16 to L36, V51 to L71, L82 to F102, W103 to T123, Q138 to G158, T170 to P190, P210 to Y230, V247 to G267, F277 to H297, W300 to L320, I338 to I358, and L361 to F381.

The protein belongs to the major facilitator superfamily. SotB (TC 2.A.1.2) family.

Its subcellular location is the cell inner membrane. Its function is as follows. Involved in the efflux of sugars. The physiological role may be the reduction of the intracellular concentration of toxic sugars or sugar metabolites. This is Probable sugar efflux transporter from Helicobacter acinonychis (strain Sheeba).